Consider the following 253-residue polypeptide: Sec-independent protein translocase protein TatC (253 aa).

Transmembrane regions (helical) follow at residues 18–38 (VSVG…KSIF), 69–89 (AIVI…APGL), 96–116 (VILP…AFSY), 151–171 (LILG…LAKV), 187–207 (IVVI…SQIF), and 208–228 (MALP…MVNP). The disordered stretch occupies residues 231–253 (KDNENNNENNNENNTKENTKSES). Residues 244 to 253 (NTKENTKSES) show a composition bias toward basic and acidic residues.

It belongs to the TatC family. The Tat system comprises two distinct complexes: a TatABC complex, containing multiple copies of TatA, TatB and TatC subunits, and a separate TatA complex, containing only TatA subunits. Substrates initially bind to the TatABC complex, which probably triggers association of the separate TatA complex to form the active translocon.

It localises to the cell inner membrane. Its function is as follows. Part of the twin-arginine translocation (Tat) system that transports large folded proteins containing a characteristic twin-arginine motif in their signal peptide across membranes. Together with TatB, TatC is part of a receptor directly interacting with Tat signal peptides. The chain is Sec-independent protein translocase protein TatC from Helicobacter pylori (strain ATCC 700392 / 26695) (Campylobacter pylori).